We begin with the raw amino-acid sequence, 447 residues long: UDP-N-acetylmuramoylalanine--D-glutamate ligase (447 aa).

Position 112 to 118 (112 to 118) interacts with ATP; it reads GTNGKST.

This sequence belongs to the MurCDEF family.

The protein resides in the cytoplasm. It catalyses the reaction UDP-N-acetyl-alpha-D-muramoyl-L-alanine + D-glutamate + ATP = UDP-N-acetyl-alpha-D-muramoyl-L-alanyl-D-glutamate + ADP + phosphate + H(+). It participates in cell wall biogenesis; peptidoglycan biosynthesis. Functionally, cell wall formation. Catalyzes the addition of glutamate to the nucleotide precursor UDP-N-acetylmuramoyl-L-alanine (UMA). This Legionella pneumophila (strain Lens) protein is UDP-N-acetylmuramoylalanine--D-glutamate ligase.